The sequence spans 893 residues: Translation initiation factor IF-2 (893 aa).

Disordered regions lie at residues 51 to 203 (KEHG…AEAE) and 216 to 300 (EENE…SMQH). Composition is skewed to basic and acidic residues over residues 102–203 (ALEE…AEAE), 216–238 (EENE…DADY), and 245–261 (HARE…EQQP). Positions 392–561 (GRAPVVTIMG…LLQSEVLELT (170 aa)) constitute a tr-type G domain. Residues 401 to 408 (GHVDHGKT) are G1. GTP is bound at residue 401–408 (GHVDHGKT). The tract at residues 426–430 (GITQH) is G2. Residues 447–450 (DTPG) form a G3 region. GTP-binding positions include 447-451 (DTPGH) and 501-504 (NKID). The tract at residues 501 to 504 (NKID) is G4. Positions 537 to 539 (SAK) are G5.

It belongs to the TRAFAC class translation factor GTPase superfamily. Classic translation factor GTPase family. IF-2 subfamily.

It localises to the cytoplasm. One of the essential components for the initiation of protein synthesis. Protects formylmethionyl-tRNA from spontaneous hydrolysis and promotes its binding to the 30S ribosomal subunits. Also involved in the hydrolysis of GTP during the formation of the 70S ribosomal complex. The protein is Translation initiation factor IF-2 of Aliivibrio fischeri (strain MJ11) (Vibrio fischeri).